Reading from the N-terminus, the 716-residue chain is Fatty acid oxidation complex subunit alpha (716 aa).

The segment at 1 to 189 is enoyl-CoA hydratase/isomerase; it reads MIYQSPTIQV…KVGAVDAVVA (189 aa). Aspartate 296 contacts substrate. The segment at 311 to 716 is 3-hydroxyacyl-CoA dehydrogenase; sequence KEVKNAAVLG…ATNNGSYYQA (406 aa). Residues methionine 324, aspartate 343, 400–402, lysine 407, and serine 429 each bind NAD(+); that span reads VVE. Histidine 450 acts as the For 3-hydroxyacyl-CoA dehydrogenase activity in catalysis. Position 453 (asparagine 453) interacts with NAD(+). 2 residues coordinate substrate: asparagine 500 and tyrosine 660.

It in the N-terminal section; belongs to the enoyl-CoA hydratase/isomerase family. The protein in the C-terminal section; belongs to the 3-hydroxyacyl-CoA dehydrogenase family. In terms of assembly, heterotetramer of two alpha chains (FadB) and two beta chains (FadA).

It catalyses the reaction a (3S)-3-hydroxyacyl-CoA + NAD(+) = a 3-oxoacyl-CoA + NADH + H(+). The catalysed reaction is a (3S)-3-hydroxyacyl-CoA = a (2E)-enoyl-CoA + H2O. The enzyme catalyses a 4-saturated-(3S)-3-hydroxyacyl-CoA = a (3E)-enoyl-CoA + H2O. It carries out the reaction (3S)-3-hydroxybutanoyl-CoA = (3R)-3-hydroxybutanoyl-CoA. It catalyses the reaction a (3Z)-enoyl-CoA = a 4-saturated (2E)-enoyl-CoA. The catalysed reaction is a (3E)-enoyl-CoA = a 4-saturated (2E)-enoyl-CoA. Its pathway is lipid metabolism; fatty acid beta-oxidation. Its function is as follows. Involved in the aerobic and anaerobic degradation of long-chain fatty acids via beta-oxidation cycle. Catalyzes the formation of 3-oxoacyl-CoA from enoyl-CoA via L-3-hydroxyacyl-CoA. It can also use D-3-hydroxyacyl-CoA and cis-3-enoyl-CoA as substrate. The polypeptide is Fatty acid oxidation complex subunit alpha (Shewanella putrefaciens (strain CN-32 / ATCC BAA-453)).